The following is a 396-amino-acid chain: MYQIGEALIGEGNEVAHIDLLIGDKNGPVGIAFANGMTQLSMGHTPLLAVVRPNLIPKPATLIVPKVTVKNMGQAAQIFGPAQAAVAKAVADAVEEGVVPKDLCEDVVIIVSVFIHPEAQDPTKIYKYNYGATKLALTRAMEKFPGVDKVTYEKDRGVHAIMGYKITRLWDAPYLQIAIDAPDLGVVERVLKNVPKNDHLIIEAGTPLIKRYGLSVISKIREIRKDAFIVADLKTLDTGNLEARMAADNLADAVVCSGLAPIATIEKFIEEARKVGIYSIIDTLNVENPAKLIAALKVKPDIVELHRGIDTESQSAEHAWGNIPEIKKAAGGKKLLVAVAGGVKVENVETALKGGADILVVGRSITNAKDIEGESRRFLQAMKKDEIDQYRIMTDF.

The segment at 1–161 (MYQIGEALIG…YEKDRGVHAI (161 aa)) is formaldehyde-activating enzyme. His-17 (proton donor) is an active-site residue. 5 residues coordinate substrate: Asp-19, Leu-48, Lys-66, Thr-68, and Gln-83. The interval 162–396 (MGYKITRLWD…IDQYRIMTDF (235 aa)) is 3-hexulose-6-phosphate synthase.

In the N-terminal section; belongs to the formaldehyde-activating enzyme family. This sequence in the C-terminal section; belongs to the HPS/KGPDC family. HPS subfamily.

It carries out the reaction 5,6,7,8-tetrahydromethanopterin + formaldehyde = 5,10-methylenetetrahydromethanopterin + H2O. The catalysed reaction is D-ribulose 5-phosphate + formaldehyde = D-arabino-hex-3-ulose 6-phosphate. It functions in the pathway carbohydrate biosynthesis; D-ribose 5-phosphate biosynthesis. Functionally, catalyzes the condensation of formaldehyde with tetrahydromethanopterin (H(4)MPT) to 5,10-methylenetetrahydromethanopterin. Catalyzes the reversible formation of ribulose-5-phosphate and formaldehyde from 3-hexulose-6-phosphate. This is Bifunctional enzyme Fae/Hps from Methanocella arvoryzae (strain DSM 22066 / NBRC 105507 / MRE50).